Consider the following 270-residue polypeptide: Aliphatic sulfonates import ATP-binding protein SsuB 3 (270 aa).

Residues 17–238 (LAVRNLKKAF…VRGSHRLAAL (222 aa)) form the ABC transporter domain. 49 to 56 (GRSGCGKS) is a binding site for ATP.

It belongs to the ABC transporter superfamily. Aliphatic sulfonates importer (TC 3.A.1.17.2) family. In terms of assembly, the complex is composed of two ATP-binding proteins (SsuB), two transmembrane proteins (SsuC) and a solute-binding protein (SsuA).

The protein localises to the cell inner membrane. The enzyme catalyses ATP + H2O + aliphatic sulfonate-[sulfonate-binding protein]Side 1 = ADP + phosphate + aliphatic sulfonateSide 2 + [sulfonate-binding protein]Side 1.. Part of the ABC transporter complex SsuABC involved in aliphatic sulfonates import. Responsible for energy coupling to the transport system. This Pseudomonas savastanoi pv. phaseolicola (strain 1448A / Race 6) (Pseudomonas syringae pv. phaseolicola (strain 1448A / Race 6)) protein is Aliphatic sulfonates import ATP-binding protein SsuB 3.